The chain runs to 426 residues: Adenylosuccinate synthetase (426 aa).

GTP-binding positions include 18–24 (GDEGKGK) and 46–48 (GHT). Catalysis depends on aspartate 19, which acts as the Proton acceptor. Positions 19 and 46 each coordinate Mg(2+). IMP contacts are provided by residues 19 to 22 (DEGK), 44 to 47 (NAGH), threonine 136, arginine 150, glutamine 222, threonine 237, and arginine 301. Catalysis depends on histidine 47, which acts as the Proton donor. 297-303 (VTTKRKR) provides a ligand contact to substrate. GTP-binding positions include arginine 303, 329 to 331 (KID), and 413 to 415 (GTG).

Belongs to the adenylosuccinate synthetase family. In terms of assembly, homodimer. Mg(2+) is required as a cofactor.

The protein localises to the cytoplasm. It catalyses the reaction IMP + L-aspartate + GTP = N(6)-(1,2-dicarboxyethyl)-AMP + GDP + phosphate + 2 H(+). The protein operates within purine metabolism; AMP biosynthesis via de novo pathway; AMP from IMP: step 1/2. Its function is as follows. Plays an important role in the de novo pathway and in the salvage pathway of purine nucleotide biosynthesis. Catalyzes the first committed step in the biosynthesis of AMP from IMP. The chain is Adenylosuccinate synthetase from Schistosoma mansoni (Blood fluke).